A 208-amino-acid polypeptide reads, in one-letter code: Ribonuclease HII (208 aa).

The region spanning 13-202 (DLVAGVDEVG…VRQAYEAREA (190 aa)) is the RNase H type-2 domain. Positions 19, 20, and 111 each coordinate a divalent metal cation.

The protein belongs to the RNase HII family. Mn(2+) serves as cofactor. It depends on Mg(2+) as a cofactor.

The protein localises to the cytoplasm. It catalyses the reaction Endonucleolytic cleavage to 5'-phosphomonoester.. In terms of biological role, endonuclease that specifically degrades the RNA of RNA-DNA hybrids. The sequence is that of Ribonuclease HII from Pseudomonas fluorescens (strain ATCC BAA-477 / NRRL B-23932 / Pf-5).